Here is a 116-residue protein sequence, read N- to C-terminus: Large ribosomal subunit protein bL17 (116 aa).

This sequence belongs to the bacterial ribosomal protein bL17 family. In terms of assembly, part of the 50S ribosomal subunit. Contacts protein L32.

The sequence is that of Large ribosomal subunit protein bL17 from Aliarcobacter butzleri (strain RM4018) (Arcobacter butzleri).